An 82-amino-acid chain; its full sequence is Small ribosomal subunit protein eS17 (82 aa).

It belongs to the eukaryotic ribosomal protein eS17 family.

This Sulfolobus acidocaldarius (strain ATCC 33909 / DSM 639 / JCM 8929 / NBRC 15157 / NCIMB 11770) protein is Small ribosomal subunit protein eS17.